A 344-amino-acid chain; its full sequence is Arginine N-succinyltransferase (344 aa).

Succinyl-CoA is bound at residue Leu125. His229 functions as the Proton donor in the catalytic mechanism.

Belongs to the arginine N-succinyltransferase family.

It carries out the reaction succinyl-CoA + L-arginine = N(2)-succinyl-L-arginine + CoA + H(+). It participates in amino-acid degradation; L-arginine degradation via AST pathway; L-glutamate and succinate from L-arginine: step 1/5. Catalyzes the transfer of succinyl-CoA to arginine to produce N(2)-succinylarginine. In Salmonella typhi, this protein is Arginine N-succinyltransferase.